Here is a 130-residue protein sequence, read N- to C-terminus: Fluoride-specific ion channel FluC (130 aa).

Helical transmembrane passes span 1-21 (MGEI…RYGL), 36-56 (GTLI…QWGF), 65-85 (LKLM…TFSY), and 103-123 (ILAN…LGSL). Na(+) contacts are provided by G75 and T78.

Belongs to the fluoride channel Fluc/FEX (TC 1.A.43) family.

It localises to the cell membrane. The enzyme catalyses fluoride(in) = fluoride(out). Its activity is regulated as follows. Na(+) is not transported, but it plays an essential structural role and its presence is essential for fluoride channel function. In terms of biological role, fluoride-specific ion channel. Important for reducing fluoride concentration in the cell, thus reducing its toxicity. This is Fluoride-specific ion channel FluC from Dehalococcoides mccartyi (strain ATCC BAA-2266 / KCTC 15142 / 195) (Dehalococcoides ethenogenes (strain 195)).